Consider the following 928-residue polypeptide: ATP-dependent DNA helicase PIF5 (928 aa).

A mitochondrion-targeting transit peptide spans 1–49 (MLSRLSAVWRPSRVALRIQRVDFTTCGNRLNRSTQPNEPPLVSGIAARS). Disordered regions lie at residues 29–141 (RLNR…DVAI) and 176–231 (LRAK…FSDA). Over residues 52 to 61 (AKAEPVEKRG) the composition is skewed to basic and acidic residues. 264–271 (GGAGSGKS) provides a ligand contact to ATP. Disordered regions lie at residues 389–421 (PIPP…APSK), 481–513 (KSSA…AAAE), 545–572 (IYPS…EDTM), and 585–607 (STHE…SQPW). Over residues 550-566 (NDGSSQQTGSSNGANSV) the composition is skewed to polar residues. Residues 858-877 (QAYVALSRSTRLDNIRLLDF) mediate DNA binding. Residues 898-928 (EELDNEIEDDGTEGDEEALEGDGEYEGEVEE) form a disordered region.

This sequence belongs to the helicase family. PIF1 subfamily. As to quaternary structure, monomer. It depends on Mg(2+) as a cofactor.

Its subcellular location is the mitochondrion. The enzyme catalyses Couples ATP hydrolysis with the unwinding of duplex DNA at the replication fork by translocating in the 5'-3' direction. This creates two antiparallel DNA single strands (ssDNA). The leading ssDNA polymer is the template for DNA polymerase III holoenzyme which synthesizes a continuous strand.. It catalyses the reaction ATP + H2O = ADP + phosphate + H(+). Functionally, DNA-dependent ATPase and 5'-3' DNA helicase required for the maintenance of mitochondrial (kinetoplast) genome stability. Involved in processing of minicircle Okazaki fragments. The chain is ATP-dependent DNA helicase PIF5 from Trypanosoma brucei brucei (strain 927/4 GUTat10.1).